Reading from the N-terminus, the 476-residue chain is ATP synthase subunit beta 2 (476 aa).

160 to 167 lines the ATP pocket; that stretch reads GGAGVGKT.

It belongs to the ATPase alpha/beta chains family. F-type ATPases have 2 components, CF(1) - the catalytic core - and CF(0) - the membrane proton channel. CF(1) has five subunits: alpha(3), beta(3), gamma(1), delta(1), epsilon(1). CF(0) has four main subunits: a(1), b(1), b'(1) and c(9-12).

It is found in the cell inner membrane. The enzyme catalyses ATP + H2O + 4 H(+)(in) = ADP + phosphate + 5 H(+)(out). In terms of biological role, produces ATP from ADP in the presence of a proton gradient across the membrane. The catalytic sites are hosted primarily by the beta subunits. The chain is ATP synthase subunit beta 2 from Bradyrhizobium sp. (strain BTAi1 / ATCC BAA-1182).